The sequence spans 900 residues: Protein translocase subunit SecA (900 aa).

Residues Gln-87, 105–109 (GEGKT), and Asp-510 each bind ATP. Residues 857 to 890 (DSLDSLSDGGSDSADGQEYPKVGRNEPCPCGSGK) are disordered. Residues 860–872 (DSLSDGGSDSADG) are compositionally biased toward low complexity. 4 residues coordinate Zn(2+): Cys-884, Cys-886, Cys-895, and His-896.

Belongs to the SecA family. In terms of assembly, monomer and homodimer. Part of the essential Sec protein translocation apparatus which comprises SecA, SecYEG and auxiliary proteins SecDF-YajC and YidC. It depends on Zn(2+) as a cofactor.

Its subcellular location is the cell inner membrane. The protein localises to the cytoplasm. It carries out the reaction ATP + H2O + cellular proteinSide 1 = ADP + phosphate + cellular proteinSide 2.. In terms of biological role, part of the Sec protein translocase complex. Interacts with the SecYEG preprotein conducting channel. Has a central role in coupling the hydrolysis of ATP to the transfer of proteins into and across the cell membrane, serving both as a receptor for the preprotein-SecB complex and as an ATP-driven molecular motor driving the stepwise translocation of polypeptide chains across the membrane. This is Protein translocase subunit SecA from Marinomonas sp. (strain MWYL1).